A 294-amino-acid chain; its full sequence is GTPase Era (294 aa).

The Era-type G domain occupies 4-170; sequence KSGFVSVIGR…VEEIFTFLPE (167 aa). The segment at 12 to 19 is G1; the sequence is GRPNVGKS. 12–19 contacts GTP; the sequence is GRPNVGKS. The interval 38-42 is G2; the sequence is QTTRN. The interval 59–62 is G3; that stretch reads DTPG. Residues 59–63 and 121–124 contribute to the GTP site; these read DTPGI and NKID. Residues 121–124 form a G4 region; it reads NKID. A G5 region spans residues 149 to 151; the sequence is ISA. A KH type-2 domain is found at 201 to 278; the sequence is TREEVPYGVA…YLDLWVKIEK (78 aa).

It belongs to the TRAFAC class TrmE-Era-EngA-EngB-Septin-like GTPase superfamily. Era GTPase family. In terms of assembly, monomer.

The protein resides in the cytoplasm. It is found in the cell inner membrane. Its function is as follows. An essential GTPase that binds both GDP and GTP, with rapid nucleotide exchange. Plays a role in 16S rRNA processing and 30S ribosomal subunit biogenesis and possibly also in cell cycle regulation and energy metabolism. The protein is GTPase Era of Halothermothrix orenii (strain H 168 / OCM 544 / DSM 9562).